We begin with the raw amino-acid sequence, 106 residues long: uncharacterized protein (106 aa).

This is an uncharacterized protein from Escherichia coli O157:H7.